Here is a 40-residue protein sequence, read N- to C-terminus: Natriuretic peptide PaNP-b (40 aa).

An intrachain disulfide couples Cys-9 to Cys-25. Positions 36–40 (IPGGS) are excised as a propeptide.

Belongs to the natriuretic peptide family. Expressed by the venom gland.

Its subcellular location is the secreted. Functionally, snake venom natriuretic peptide that targets both NPR1 and NPR2. Exhibits hypotensive and vasodepressor activities. This chain is Natriuretic peptide PaNP-b, found in Pseudechis australis (Mulga snake).